The primary structure comprises 300 residues: Putative hydro-lyase Dshi_3152 (300 aa).

This sequence belongs to the D-glutamate cyclase family.

The polypeptide is Putative hydro-lyase Dshi_3152 (Dinoroseobacter shibae (strain DSM 16493 / NCIMB 14021 / DFL 12)).